A 1061-amino-acid polypeptide reads, in one-letter code: TonB-dependent transporter Oar (1061 aa).

An N-terminal signal peptide occupies residues Met1–Ala26. Residues Glu121 to Arg243 enclose the TBDR plug domain. The TBDR beta-barrel domain maps to Glu248–Phe1061. The tract at residues Arg701 to Gln722 is disordered. Positions Gly709 to Gln722 are enriched in polar residues.

The protein belongs to the TonB-dependent receptor family. In terms of assembly, interacts with TonB. Part of a transport system composed of the outer membrane transporter Oar, the trans-periplasmic binding protein TonB and the inner membrane proteins ExbB and ExbD.

It localises to the cell outer membrane. Required for secretion of the protease PopC across the bacterial outer membrane. Binds and probably transports PopC from the periplasm to the extracellular milieu. It derives its energy for transport by interacting with the trans-periplasmic membrane protein TonB. Required for cellular adhesion during fruiting body formation, a multicellular developmental program that is induced in response to starvation. The chain is TonB-dependent transporter Oar from Myxococcus xanthus.